Reading from the N-terminus, the 257-residue chain is Acetylglutamate kinase (257 aa).

Residues 43-44 (GG), Arg65, and Asn157 each bind substrate. ATP contacts are provided by residues 180-185 (DVSGIL) and 208-210 (IIT).

This sequence belongs to the acetylglutamate kinase family. ArgB subfamily. In terms of assembly, homodimer.

It localises to the cytoplasm. It catalyses the reaction N-acetyl-L-glutamate + ATP = N-acetyl-L-glutamyl 5-phosphate + ADP. It participates in amino-acid biosynthesis; L-arginine biosynthesis; N(2)-acetyl-L-ornithine from L-glutamate: step 2/4. Catalyzes the ATP-dependent phosphorylation of N-acetyl-L-glutamate. The protein is Acetylglutamate kinase of Photorhabdus laumondii subsp. laumondii (strain DSM 15139 / CIP 105565 / TT01) (Photorhabdus luminescens subsp. laumondii).